The primary structure comprises 568 residues: Hexose transporter 1 (568 aa).

The Cytoplasmic portion of the chain corresponds to 1 to 32; it reads MATEEMREKSLKREAESLWDIPPESYASKACS. Residues 33-53 form a helical membrane-spanning segment; the sequence is CMGTAAQLVMVAVLGSFQFGF. Residues 54–86 are Extracellular-facing; the sequence is NLSALNTSKAFIILDFGWCKDENGGHYSDCDTG. A disulfide bond links cysteine 72 and cysteine 83. Residues 87–107 form a helical membrane-spanning segment; the sequence is LVYGSLINTAVFLGACVGCLL. Topologically, residues 108-119 are cytoplasmic; it reads GGRLTDFGRRAS. Residues 120 to 140 traverse the membrane as a helical segment; sequence LIFTHCVCTLGCILSAAAEGF. Residues 141–142 lie on the Extracellular side of the membrane; that stretch reads PT. A helical transmembrane segment spans residues 143–163; sequence LLIARLVVGVAVGMFTVCVPM. The Cytoplasmic segment spans residues 164–182; that stretch reads YLSEVTPDDRRGYFGTFHQ. Glutamine 182 is an alpha-D-glucose binding site. Residue glutamine 182 coordinates beta-D-glucose. Residues 183 to 203 traverse the membrane as a helical segment; that stretch reads LFITLGIFFGTLLGLAFGNAP. Over 204–220 the chain is Extracellular; the sequence is AGDEVYEVSTFQQAWWR. Residues 221–241 form a helical membrane-spanning segment; the sequence is VMLGLPAVVSLLAIWLLWFVF. Residues 242–306 are Cytoplasmic-facing; it reads PFETPQYMVE…KAIVHPTYRS (65 aa). Residues 307–327 traverse the membrane as a helical segment; it reads VILLACLLSIMQQFTGINVLV. Alpha-D-glucose contacts are provided by glutamine 318, glutamine 319, and asparagine 324. Residue glutamine 318 participates in beta-D-glucose binding. Asparagine 324 contributes to the beta-D-glucose binding site. At 328 to 345 the chain is on the extracellular side; the sequence is ANSNNLYSSLKLPQDAVT. The helical transmembrane segment at 346-366 threads the bilayer; it reads GLTVGFTALNVFLTVITIPLV. Asparagine 355 provides a ligand contact to beta-D-glucose. Residues 367-374 lie on the Cytoplasmic side of the membrane; the sequence is DRLGRRTL. Residues 375-395 form a helical membrane-spanning segment; that stretch reads LLFSEAVMFVAMGIAFVANLV. At 396–406 the chain is on the extracellular side; it reads DQSNTAVQWVT. A helical transmembrane segment spans residues 407 to 427; the sequence is VACVYVFIVGFAVGYGPVLWI. Tryptophan 426 contributes to the alpha-D-glucose binding site. Residues 428–443 are Cytoplasmic-facing; sequence YIHEIFPPEIKQGAAS. The helical transmembrane segment at 444 to 464 threads the bilayer; the sequence is LASALNWVATVAIVLPSDFLL. At 465-469 the chain is on the extracellular side; it reads KQGFS. A helical transmembrane segment spans residues 470–490; that stretch reads VFVGICTVALAIIFVVTFIFV. Topologically, residues 491–568 are cytoplasmic; it reads KETKGLSIEE…DDLTKGTEVV (78 aa).

It belongs to the major facilitator superfamily. Sugar transporter (TC 2.A.1.1) family. In terms of assembly, homodimer.

The protein resides in the cell membrane. It catalyses the reaction D-glucose(out) = D-glucose(in). The catalysed reaction is D-fructose(out) = D-fructose(in). The enzyme catalyses D-galactose(in) = D-galactose(out). It carries out the reaction D-mannose(out) = D-mannose(in). It catalyses the reaction D-glucosamine(out) = D-glucosamine(in). The catalysed reaction is D-xylose(out) = D-xylose(in). Its activity is regulated as follows. Inhibited by cytochalasin B. In terms of biological role, sodium-independent facilitative hexose transporter. Can transport D-glucose and D-mannose with high affinity, and D-fructose and D-galactose with low affinity. Can transport D-xylose and D-glucosamine. This is Hexose transporter 1 from Toxoplasma gondii.